The chain runs to 709 residues: Polyribonucleotide nucleotidyltransferase (709 aa).

Mg(2+)-binding residues include Asp-487 and Asp-493. The region spanning 554–613 (PRIHTMKISSDKIKDVIGKGGAVIRALCEETGTTIEIEDDGTIKIAATEGAAAKEAIRRI) is the KH domain. The S1 motif domain occupies 623–691 (GKIYTGKVMR…RQGRIRLSIK (69 aa)).

The protein belongs to the polyribonucleotide nucleotidyltransferase family. In terms of assembly, component of the RNA degradosome, which is a multiprotein complex involved in RNA processing and mRNA degradation. Mg(2+) is required as a cofactor.

The protein resides in the cytoplasm. It catalyses the reaction RNA(n+1) + phosphate = RNA(n) + a ribonucleoside 5'-diphosphate. Functionally, involved in mRNA degradation. Catalyzes the phosphorolysis of single-stranded polyribonucleotides processively in the 3'- to 5'-direction. The chain is Polyribonucleotide nucleotidyltransferase from Aliivibrio fischeri (strain ATCC 700601 / ES114) (Vibrio fischeri).